The primary structure comprises 607 residues: ATP-dependent rRNA helicase SPB4 (607 aa).

Positions 7-35 (WDDLEYPIQPWIRSAVDVMGFENMTPVQA) match the Q motif motif. A Helicase ATP-binding domain is found at 38–224 (IPLFARNKDV…KTGLRNPVKV (187 aa)). Position 51–58 (51–58 (SVTGSGKT)) interacts with ATP. A DEAD box motif is present at residues 172 to 175 (DEAD). The region spanning 248-404 (KLEQVISIIN…EISLDIVNLP (157 aa)) is the Helicase C-terminal domain. A disordered region spans residues 527-607 (KSELKKKNMS…NGMQGSFDDL (81 aa)). Positions 529–565 (ELKKKNMSWSNNTQSKEEKVERRTKMALKRKRIEEEL) form a coiled coil. 2 stretches are compositionally biased toward basic and acidic residues: residues 543-552 (SKEEKVERRT) and 560-570 (RIEEELSKEAD). Residues 587–601 (ILQNKKSKNSNNGMQ) are compositionally biased toward polar residues.

Belongs to the DEAD box helicase family. DDX55/SPB4 subfamily. In terms of assembly, component of pre-60S ribosomal complexes.

The protein localises to the nucleus. Its subcellular location is the nucleolus. The catalysed reaction is ATP + H2O = ADP + phosphate + H(+). In terms of biological role, ATP-binding RNA helicase involved in the biogenesis of 60S ribosomal subunits. Binds 90S pre-ribosomal particles and dissociates from pre-60S ribosomal particles after processing of 27SB pre-rRNA. Required for the normal formation of 18S rRNA through the processing of pre-rRNAs at sites A0, A1 and A2, and the normal formation of 25S and 5.8S rRNAs through the processing of pre-rRNAs at sites C1 and C2. The protein is ATP-dependent rRNA helicase SPB4 of Vanderwaltozyma polyspora (strain ATCC 22028 / DSM 70294 / BCRC 21397 / CBS 2163 / NBRC 10782 / NRRL Y-8283 / UCD 57-17) (Kluyveromyces polysporus).